We begin with the raw amino-acid sequence, 124 residues long: Ribonuclease pancreatic (124 aa).

The span at 1-13 (KESAAAKFERQHM) shows a compositional bias: basic and acidic residues. Residues 1-24 (KESAAAKFERQHMDPSTSSASSSN) are disordered. Substrate-binding residues include Lys-7 and Arg-10. His-12 (proton acceptor) is an active-site residue. Intrachain disulfides connect Cys-26–Cys-84, Cys-40–Cys-95, Cys-58–Cys-110, and Cys-65–Cys-72. Substrate-binding positions include 41-45 (KPVNT), Lys-66, and Arg-85. The Proton donor role is filled by His-119.

It belongs to the pancreatic ribonuclease family. As to quaternary structure, monomer. Interacts with and forms tight 1:1 complexes with RNH1. Dimerization of two such complexes may occur. Interaction with RNH1 inhibits this protein. In terms of tissue distribution, pancreas.

It is found in the secreted. It catalyses the reaction an [RNA] containing cytidine + H2O = an [RNA]-3'-cytidine-3'-phosphate + a 5'-hydroxy-ribonucleotide-3'-[RNA].. The enzyme catalyses an [RNA] containing uridine + H2O = an [RNA]-3'-uridine-3'-phosphate + a 5'-hydroxy-ribonucleotide-3'-[RNA].. Its function is as follows. Endonuclease that catalyzes the cleavage of RNA on the 3' side of pyrimidine nucleotides. Acts on single-stranded and double-stranded RNA. This is Ribonuclease pancreatic (RNASE1) from Cervus elaphus (Red deer).